The primary structure comprises 50 residues: Temporin-SHb (50 aa).

Residues Phe-1–Cys-10 form the signal peptide. Positions Glu-11 to Arg-35 are excised as a propeptide. A disordered region spans residues Gln-12–Glu-31. The segment covering Arg-14–Val-30 has biased composition (acidic residues). Leu-48 is modified (leucine amide).

This sequence belongs to the frog skin active peptide (FSAP) family. Temporin subfamily. As to expression, expressed by the skin glands.

Its subcellular location is the secreted. Amphipathic alpha-helical peptide with no antimicrobial activity. Does not display anti-leishmania activity. Does not show hemolytic activity (LC(50)&gt;116 uM). This is Temporin-SHb from Pelophylax saharicus (Sahara frog).